We begin with the raw amino-acid sequence, 331 residues long: UPF0324 membrane protein SA0329 (331 aa).

Transmembrane regions (helical) follow at residues 9 to 26, 31 to 48, 69 to 88, 93 to 115, 122 to 144, 154 to 176, 183 to 202, 217 to 234, 247 to 269, 273 to 295, and 308 to 330; these read FMIG…SFLA, ILDK…AILY, LLRF…DIIG, LLAI…NKLL, ALLL…APIF, SIGI…YAIF, YGAW…LAGG, LGRV…ILIM, ISIP…VTIP, LNIL…GLNV, and LMTI…HWLY.

Belongs to the UPF0324 family.

It localises to the cell membrane. This is UPF0324 membrane protein SA0329 from Staphylococcus aureus (strain N315).